We begin with the raw amino-acid sequence, 268 residues long: Deoxyuridine 5'-triphosphate nucleotidohydrolase (268 aa).

Substrate is bound by residues Arg-172–Ser-174 and Phe-263–Gly-264.

Belongs to the dUTPase family. It depends on Mg(2+) as a cofactor.

It catalyses the reaction dUTP + H2O = dUMP + diphosphate + H(+). In terms of biological role, involved in nucleotide metabolism: produces dUMP, the immediate precursor of thymidine nucleotides and decreases the intracellular concentration of dUTP to avoid uracil incorporation into viral DNA. The protein is Deoxyuridine 5'-triphosphate nucleotidohydrolase of Suid herpesvirus 1 (strain Kaplan) (SuHV-1).